The following is a 310-amino-acid chain: Methionyl-tRNA formyltransferase (310 aa).

112-115 (SLLP) serves as a coordination point for (6S)-5,6,7,8-tetrahydrofolate.

The protein belongs to the Fmt family.

It carries out the reaction L-methionyl-tRNA(fMet) + (6R)-10-formyltetrahydrofolate = N-formyl-L-methionyl-tRNA(fMet) + (6S)-5,6,7,8-tetrahydrofolate + H(+). Attaches a formyl group to the free amino group of methionyl-tRNA(fMet). The formyl group appears to play a dual role in the initiator identity of N-formylmethionyl-tRNA by promoting its recognition by IF2 and preventing the misappropriation of this tRNA by the elongation apparatus. The chain is Methionyl-tRNA formyltransferase from Pelagibacter ubique (strain HTCC1062).